The primary structure comprises 359 residues: S-adenosylmethionine:tRNA ribosyltransferase-isomerase (359 aa).

Belongs to the QueA family. As to quaternary structure, monomer.

It localises to the cytoplasm. It catalyses the reaction 7-aminomethyl-7-carbaguanosine(34) in tRNA + S-adenosyl-L-methionine = epoxyqueuosine(34) in tRNA + adenine + L-methionine + 2 H(+). It participates in tRNA modification; tRNA-queuosine biosynthesis. Transfers and isomerizes the ribose moiety from AdoMet to the 7-aminomethyl group of 7-deazaguanine (preQ1-tRNA) to give epoxyqueuosine (oQ-tRNA). The sequence is that of S-adenosylmethionine:tRNA ribosyltransferase-isomerase from Ralstonia pickettii (strain 12J).